Here is a 101-residue protein sequence, read N- to C-terminus: Small ribosomal subunit protein uS14 (101 aa).

This sequence belongs to the universal ribosomal protein uS14 family. In terms of assembly, part of the 30S ribosomal subunit. Contacts proteins S3 and S10.

Binds 16S rRNA, required for the assembly of 30S particles and may also be responsible for determining the conformation of the 16S rRNA at the A site. In Vesicomyosocius okutanii subsp. Calyptogena okutanii (strain HA), this protein is Small ribosomal subunit protein uS14.